The sequence spans 285 residues: 4-diphosphocytidyl-2-C-methyl-D-erythritol kinase (285 aa).

K10 is a catalytic residue. 94 to 104 contributes to the ATP binding site; the sequence is PVAAGLGGGSS. D136 is a catalytic residue.

The protein belongs to the GHMP kinase family. IspE subfamily.

It catalyses the reaction 4-CDP-2-C-methyl-D-erythritol + ATP = 4-CDP-2-C-methyl-D-erythritol 2-phosphate + ADP + H(+). It functions in the pathway isoprenoid biosynthesis; isopentenyl diphosphate biosynthesis via DXP pathway; isopentenyl diphosphate from 1-deoxy-D-xylulose 5-phosphate: step 3/6. Its function is as follows. Catalyzes the phosphorylation of the position 2 hydroxy group of 4-diphosphocytidyl-2C-methyl-D-erythritol. The sequence is that of 4-diphosphocytidyl-2-C-methyl-D-erythritol kinase from Latilactobacillus sakei subsp. sakei (strain 23K) (Lactobacillus sakei subsp. sakei).